The following is a 129-amino-acid chain: MRHYEIVFMVHPDQSEQVPGMIERYTGAITTAGGTIHRMEDWGRRQLAYPIDKLHKAHYVLMNVEAEQAVIDELETNFRFNDAVIRNMIMRTKHAVTEVSPMAKAKEERFVRRDDERREDTVEAASSEE.

Residues 110 to 121 are compositionally biased toward basic and acidic residues; the sequence is FVRRDDERREDT. Positions 110–129 are disordered; sequence FVRRDDERREDTVEAASSEE.

Belongs to the bacterial ribosomal protein bS6 family.

In terms of biological role, binds together with bS18 to 16S ribosomal RNA. This is Small ribosomal subunit protein bS6 from Aeromonas salmonicida (strain A449).